A 716-amino-acid polypeptide reads, in one-letter code: Polyribonucleotide nucleotidyltransferase (716 aa).

Asp486 and Asp492 together coordinate Mg(2+). In terms of domain architecture, KH spans 553–612 (PHIYNIKINPEKIKDVIGKGGAVIRALSDETDTKIDISDDGNITIAALSQKSAAFAQQRI). Residues 622 to 690 (GRIYQGTVTR…RQGRIRLSIK (69 aa)) enclose the S1 motif domain.

Belongs to the polyribonucleotide nucleotidyltransferase family. As to quaternary structure, component of the RNA degradosome, which is a multiprotein complex involved in RNA processing and mRNA degradation. Mg(2+) serves as cofactor.

The protein localises to the cytoplasm. The catalysed reaction is RNA(n+1) + phosphate = RNA(n) + a ribonucleoside 5'-diphosphate. Involved in mRNA degradation. Catalyzes the phosphorolysis of single-stranded polyribonucleotides processively in the 3'- to 5'-direction. This is Polyribonucleotide nucleotidyltransferase from Hamiltonella defensa subsp. Acyrthosiphon pisum (strain 5AT).